The chain runs to 144 residues: Large ribosomal subunit protein uL15 (144 aa).

Over residues 1–16 (MVVRKEKKSRKYRGYR) the composition is skewed to basic residues. The interval 1-35 (MVVRKEKKSRKYRGYRTHGWGTKGQHRDRGAQGGR) is disordered.

It belongs to the universal ribosomal protein uL15 family. As to quaternary structure, part of the 50S ribosomal subunit.

Its function is as follows. Binds to the 23S rRNA. The protein is Large ribosomal subunit protein uL15 of Sulfolobus acidocaldarius (strain ATCC 33909 / DSM 639 / JCM 8929 / NBRC 15157 / NCIMB 11770).